A 291-amino-acid polypeptide reads, in one-letter code: Gamma-soluble NSF attachment protein (291 aa).

The protein belongs to the SNAP family.

The protein localises to the membrane. Its function is as follows. Required for vesicular transport between the endoplasmic reticulum and the Golgi apparatus. Binds to SNARE complex and then recruits NSF to disassemble it. The polypeptide is Gamma-soluble NSF attachment protein (GSNAP) (Arabidopsis thaliana (Mouse-ear cress)).